The chain runs to 638 residues: Methylmalonyl-CoA mutase small subunit (638 aa).

Polar residues predominate over residues Met-1–Ala-11. The disordered stretch occupies residues Met-1–Gln-34.

Belongs to the methylmalonyl-CoA mutase family. In terms of assembly, heterodimer of an alpha and a beta chain. It depends on adenosylcob(III)alamin as a cofactor.

The catalysed reaction is (R)-methylmalonyl-CoA = succinyl-CoA. The protein operates within metabolic intermediate metabolism; propanoyl-CoA degradation; succinyl-CoA from propanoyl-CoA: step 3/3. In terms of biological role, catalyzes the isomerization of succinyl-CoA to methylmalonyl-CoA during synthesis of propionate from tricarboxylic acid-cycle intermediates. In Propionibacterium freudenreichii subsp. shermanii, this protein is Methylmalonyl-CoA mutase small subunit (mutA).